A 450-amino-acid chain; its full sequence is NAD-specific glutamate dehydrogenase (450 aa).

Substrate is bound by residues Lys-90, Gln-111, and Lys-114. The active-site Proton donor is the Lys-126. Residue Gly-165 participates in substrate binding. Residues Thr-210 and Asn-241 each contribute to the NAD(+) site. A substrate-binding site is contributed by Ser-381.

This sequence belongs to the Glu/Leu/Phe/Val dehydrogenases family. In terms of assembly, homohexamer.

It carries out the reaction L-glutamate + NAD(+) + H2O = 2-oxoglutarate + NH4(+) + NADH + H(+). Its pathway is amino-acid degradation; L-glutamate degradation via hydroxyglutarate pathway; crotonoyl-CoA from L-glutamate: step 1/5. In Clostridium symbiosum (Bacteroides symbiosus), this protein is NAD-specific glutamate dehydrogenase (gdh).